The following is a 217-amino-acid chain: Vesicle transport through interaction with t-SNAREs homolog 1A (217 aa).

The Cytoplasmic segment spans residues 1–192 (MDVFERTEQN…TGIARRLATN (192 aa)). Positions 36–97 (AVREVENDID…AQLQSSNQTN (62 aa)) form a coiled coil. Residues 90–109 (LQSSNQTNSNPWSNAPDDYQ) are disordered. Residues 123–185 (SNMLDSTSDR…KSARKIMTGI (63 aa)) enclose the t-SNARE coiled-coil homology domain. A helical; Anchor for type IV membrane protein membrane pass occupies residues 193-213 (KVILSIIILLLMGIIALIICL). The Vesicular segment spans residues 214–217 (KWLR).

The protein belongs to the VTI1 family. In terms of assembly, component of the SNARE complex composed of syn7A, syn8A, vamp7A and vti1A.

The protein localises to the membrane. Its subcellular location is the cytoplasmic vesicle. The protein resides in the secretory vesicle membrane. It localises to the clathrin-coated vesicle membrane. It is found in the endosome membrane. The protein localises to the endoplasmic reticulum membrane. Functionally, V-SNARE that mediates vesicle transport pathways through interactions with t-SNAREs on the target membrane. These interactions are proposed to mediate aspects of the specificity of vesicle trafficking and to promote fusion of the lipid bilayers. The sequence is that of Vesicle transport through interaction with t-SNAREs homolog 1A from Dictyostelium discoideum (Social amoeba).